The sequence spans 439 residues: Cell division protein FtsA (439 aa).

The protein belongs to the FtsA/MreB family. As to quaternary structure, self-interacts. Interacts with FtsZ.

Its subcellular location is the cell inner membrane. In terms of biological role, cell division protein that is involved in the assembly of the Z ring. May serve as a membrane anchor for the Z ring. This is Cell division protein FtsA from Shigella flexneri.